A 214-amino-acid chain; its full sequence is Ribonuclease P protein component 3 (214 aa).

The protein belongs to the eukaryotic/archaeal RNase P protein component 3 family. Consists of a catalytic RNA component and at least 4-5 protein subunits.

It localises to the cytoplasm. It carries out the reaction Endonucleolytic cleavage of RNA, removing 5'-extranucleotides from tRNA precursor.. Part of ribonuclease P, a protein complex that generates mature tRNA molecules by cleaving their 5'-ends. The polypeptide is Ribonuclease P protein component 3 (Thermococcus gammatolerans (strain DSM 15229 / JCM 11827 / EJ3)).